A 547-amino-acid polypeptide reads, in one-letter code: Cilia- and flagella- associated protein 210 (547 aa).

The stretch at 184 to 254 (KLNVEKAFKE…EIEMKKKQGK (71 aa)) forms a coiled coil. The tract at residues 210–237 (KDHLKQIKEHEEEEERRRKEEEKDAEEI) is disordered.

Microtubule inner protein component of sperm flagellar doublet microtubules. As to expression, expressed in trachea multiciliated cells.

It localises to the cytoplasm. The protein resides in the cytoskeleton. It is found in the cilium axoneme. Its subcellular location is the flagellum axoneme. In terms of biological role, microtubule inner protein (MIP) part of the dynein-decorated doublet microtubules (DMTs) in cilia axoneme, which is required for motile cilia beating. This chain is Cilia- and flagella- associated protein 210 (CFAP210), found in Bos taurus (Bovine).